Reading from the N-terminus, the 1356-residue chain is Partitioning defective 3 homolog (1356 aa).

Serine 25 is subject to Phosphoserine. Disordered regions lie at residues 81–100 (EQDP…GTQS) and 154–262 (SVSD…GLEH). The residue at position 91 (threonine 91) is a Phosphothreonine. A compositionally biased stretch (low complexity) spans 91-100 (TSASSTGTQS). Polar residues-rich tracts occupy residues 154-163 (SVSDSNFSSE) and 171-187 (TRWS…TAGS). Residues serine 156 and serine 174 each carry the phosphoserine modification. The segment covering 190-203 (TCDRKKDENYRSLP) has biased composition (basic and acidic residues). A compositionally biased stretch (polar residues) spans 204–224 (RDTSNWSNQFQRDNARSSLSA). A compositionally biased stretch (basic and acidic residues) spans 246–260 (DNSRVEPVGHADTGL). The region spanning 271–359 (MVKLVEVPND…TPIIWFHVVP (89 aa)) is the PDZ 1 domain. Serine 383 is subject to Phosphoserine. Residues 408–448 (LNHPPEQIDSHSRLPHSAHPSGKPPSAPASAPQNVFSTTVS) are disordered. 2 consecutive PDZ domains span residues 461-546 (NIQL…LVFR) and 590-677 (EVPL…GMIQ). Position 489 is a phosphotyrosine (tyrosine 489). 7 positions are modified to phosphoserine: serine 692, serine 695, serine 715, serine 728, alanine 792, serine 809, and serine 827. Residues 712-936 (RRISHSLYSG…AAIDKSYDKP (225 aa)) are interaction with PRKCI and PRKCZ. N6-acetyllysine is present on lysine 834. At serine 837 the chain carries Phosphoserine. Lysine 851 is modified (N6-acetyllysine). Phosphoserine occurs at positions 852 and 873. Disordered stretches follow at residues 865–886 (TVDD…GLKK) and 932–1025 (SYDK…DMFR). Position 885 is an N6-acetyllysine (lysine 885). Residues 935–1356 (KPAVDDDDEG…TPEKGRPFYS (422 aa)) form an interaction with FRMD4A region. Positions 939-953 (DDDDEGMETLEEDTE) are enriched in acidic residues. A Phosphoserine; by AURKA modification is found at serine 962. The segment covering 968–982 (DQPSHSLERQMNGNQ) has biased composition (polar residues). Residues serine 971 and serine 973 each carry the phosphoserine modification. The span at 983–1009 (EKGDKTDRKKDKTGKEKKKDRDKEKDK) shows a compositional bias: basic and acidic residues. Position 1046 is a phosphoserine (serine 1046). Residues 1049–1077 (SEEERIRMKQEQERIQAKTREFRERQARE) adopt a coiled-coil conformation. The disordered stretch occupies residues 1129–1356 (QVKKPRNSKP…TPEKGRPFYS (228 aa)). A compositionally biased stretch (polar residues) spans 1136-1149 (SKPSPVDSNRSTPS). Basic and acidic residues predominate over residues 1150–1177 (NHDRIQRLRQEFQQAKQDEDVEDRRRTY). Coiled coils occupy residues 1151-1174 (HDRI…EDRR), 1201-1224 (VQMQ…YSSL), and 1280-1301 (MLET…MKKQ). Residues 1196–1205 (SVSVEVQMQR) are compositionally biased toward low complexity. Residues 1221-1245 (YSSLPRQSRKNASSVSQDSWEQNYS) are compositionally biased toward polar residues. The span at 1285 to 1298 (ELLRQEQRRKEQQM) shows a compositional bias: basic and acidic residues. Over residues 1337–1346 (SQVARLNRLQ) the composition is skewed to polar residues. Basic and acidic residues predominate over residues 1347–1356 (TPEKGRPFYS). The residue at position 1350 (lysine 1350) is an N6-acetyllysine.

It belongs to the PAR3 family. As to quaternary structure, interacts (via PDZ 1 domain) with F11R/JAM1, PARD6A and PARD6B. Interacts with PRCKI and CDH5. Interacts (via PDZ 3 domain) with PTEN (via C-terminus). Part of a complex with PARD6A or PARD6B, PRKCI or PRKCZ and CDC42 or RAC1. Component of a complex whose core is composed of ARHGAP17, AMOT, PALS1, PATJ and PARD3/PAR3. Interacts with LIMK2, AURKA and AURKB. Component of the Par polarity complex, composed of at least phosphorylated PRKCZ, PARD3 and TIAM1. Directly interacts with TIAM1 and TIAM2. Interacts with ECT2, FBF1 and SIRT2. Interacts (via coiled-coil domain) with FRMD4A. Found in a complex with PARD3, CYTH1 and FRMD4A. Interacts with SAPCD2. Interacts with PRKCA. In terms of assembly, interacts with PRKCZ. Acetylated. Deacetylated by SIRT2, thereby inhibiting Schwann cell peripheral myelination. Post-translationally, phosphorylation at Ser-827 by PRKCZ and PRKCI occurs at the most apical tip of epithelial cell-cell contacts during the initial phase of tight junction formation and may promote dissociation of the complex with PARD6. EGF-induced Tyr-1127 phosphorylation mediates dissociation from LIMK2. Phosphorylation by AURKA at Ser-962 is required for the normal establishment of neuronal polarity. In terms of tissue distribution, widely expressed.

Its subcellular location is the cytoplasm. It localises to the endomembrane system. The protein resides in the cell junction. The protein localises to the tight junction. It is found in the adherens junction. Its subcellular location is the cell membrane. It localises to the cell cortex. The protein resides in the cytoskeleton. Functionally, adapter protein involved in asymmetrical cell division and cell polarization processes. Seems to play a central role in the formation of epithelial tight junctions. Targets the phosphatase PTEN to cell junctions. Involved in Schwann cell peripheral myelination. Association with PARD6B may prevent the interaction of PARD3 with F11R/JAM1, thereby preventing tight junction assembly. The PARD6-PARD3 complex links GTP-bound Rho small GTPases to atypical protein kinase C proteins. Required for establishment of neuronal polarity and normal axon formation in cultured hippocampal neurons. In Homo sapiens (Human), this protein is Partitioning defective 3 homolog.